The following is a 2524-amino-acid chain: Highly reducing polyketide synthase Preu5 (2524 aa).

The 422-residue stretch at 5-426 folds into the Ketosynthase family 3 (KS3) domain; it reads DTPIAIIGLS…GSNSAIVIEK (422 aa). Active-site for beta-ketoacyl synthase activity residues include Cys-175, His-310, and His-350. The segment at 431-470 is disordered; sequence DELGHETNGTNGVSVSNGVNGSNGFTNGSNGTNGHAENGN. The segment covering 437–464 has biased composition (low complexity); it reads TNGTNGVSVSNGVNGSNGFTNGSNGTNG. The segment at 559–882 is malonyl-CoA:ACP transacylase (MAT) domain; the sequence is VFTGQGAQYA…TYLPSLVRNV (324 aa). Ser-648 functions as the For malonyltransferase activity in the catalytic mechanism. The N-terminal hotdog fold stretch occupies residues 950 to 1084; that stretch reads HELLGRRVVS…GQIEPEFADM (135 aa). Positions 950-1264 constitute a PKS/mFAS DH domain; the sequence is HELLGRRVVS…FRNIGSADEN (315 aa). The dehydratase (DH) domain stretch occupies residues 950–1266; that stretch reads HELLGRRVVS…NIGSADENID (317 aa). His-982 functions as the Proton acceptor; for dehydratase activity in the catalytic mechanism. The interval 1102–1264 is C-terminal hotdog fold; the sequence is ADLLEHDIEG…FRNIGSADEN (163 aa). Asp-1171 serves as the catalytic Proton donor; for dehydratase activity. A methyltransferase (CMet) domain region spans residues 1418 to 1611; sequence SQAVGDLADN…IPGVWDSEVQ (194 aa). Residues 1825-2139 form an enoylreductase (ER) domain region; that stretch reads GSPDSIYFRR…SGDHLGKIVV (315 aa). Residues 2164 to 2339 form a ketoreductase (KR) domain region; that stretch reads GTYLVTGGTR…HTVSIALPIV (176 aa). The region spanning 2445 to 2522 is the Carrier domain; it reads DPLEGLTEAL…ALATDILSQR (78 aa). O-(pantetheine 4'-phosphoryl)serine is present on Ser-2482.

The cofactor is pantetheine 4'-phosphate.

Its function is as follows. Highly reducing polyketide synthase; part of a gene cluster that mediates the biosynthesis of a yet unidentified natural product. The chain is Highly reducing polyketide synthase Preu5 from Preussia isomera (Coprophilous fungus).